The chain runs to 308 residues: Methionyl-tRNA formyltransferase (308 aa).

109–112 is a binding site for (6S)-5,6,7,8-tetrahydrofolate; sequence SLLP.

This sequence belongs to the Fmt family.

It carries out the reaction L-methionyl-tRNA(fMet) + (6R)-10-formyltetrahydrofolate = N-formyl-L-methionyl-tRNA(fMet) + (6S)-5,6,7,8-tetrahydrofolate + H(+). In terms of biological role, attaches a formyl group to the free amino group of methionyl-tRNA(fMet). The formyl group appears to play a dual role in the initiator identity of N-formylmethionyl-tRNA by promoting its recognition by IF2 and preventing the misappropriation of this tRNA by the elongation apparatus. This is Methionyl-tRNA formyltransferase from Methylococcus capsulatus (strain ATCC 33009 / NCIMB 11132 / Bath).